The primary structure comprises 554 residues: Folate synthesis bifunctional protein, mitochondrial (554 aa).

A mitochondrion-targeting transit peptide spans 1-42 (MAPLLSQTLIHTGRFLLRRFLEPPPAVISAVAASRVCFHRYY). Residues 90-215 (VIALGSNIGN…SFVLAPLVDL (126 aa)) form an HPPK region. Positions 273–541 (THVMGILNLT…NVRHNADAAK (269 aa)) constitute a Pterin-binding domain. The segment at 275–554 (VMGILNLTPD…AMLRRRRSKG (280 aa)) is DHPS. Asparagine 280 is a Mg(2+) binding site. (7,8-dihydropterin-6-yl)methyl diphosphate is bound by residues threonine 320, aspartate 357, asparagine 376, aspartate 449, lysine 494, and 529 to 531 (RVH).

The protein in the N-terminal section; belongs to the HPPK family. This sequence in the C-terminal section; belongs to the DHPS family. It depends on Mg(2+) as a cofactor. In terms of tissue distribution, ubiquitous.

The protein resides in the mitochondrion. It carries out the reaction 6-hydroxymethyl-7,8-dihydropterin + ATP = (7,8-dihydropterin-6-yl)methyl diphosphate + AMP + H(+). The catalysed reaction is (7,8-dihydropterin-6-yl)methyl diphosphate + 4-aminobenzoate = 7,8-dihydropteroate + diphosphate. It participates in cofactor biosynthesis; tetrahydrofolate biosynthesis; 2-amino-4-hydroxy-6-hydroxymethyl-7,8-dihydropteridine diphosphate from 7,8-dihydroneopterin triphosphate: step 4/4. The protein operates within cofactor biosynthesis; tetrahydrofolate biosynthesis; 7,8-dihydrofolate from 2-amino-4-hydroxy-6-hydroxymethyl-7,8-dihydropteridine diphosphate and 4-aminobenzoate: step 1/2. Functionally, catalyzes the first two consecutive steps of tetrahydrofolate biosynthesis. This Arabidopsis thaliana (Mouse-ear cress) protein is Folate synthesis bifunctional protein, mitochondrial.